The sequence spans 411 residues: Glycogen synthase kinase-3 homolog MsK-2 (411 aa).

Positions 74-358 constitute a Protein kinase domain; that stretch reads YMAERAVGQG…ALEALVHPFF (285 aa). ATP is bound by residues 80 to 88 and Lys103; that span reads VGQGSFGVV. The Proton acceptor role is filled by Asp199. Phosphotyrosine is present on Tyr234.

Belongs to the protein kinase superfamily. CMGC Ser/Thr protein kinase family. GSK-3 subfamily. In terms of tissue distribution, absent in leaves and petioles while a moderate expression is seen in the stems, roots, and nodes.

It catalyses the reaction L-seryl-[protein] + ATP = O-phospho-L-seryl-[protein] + ADP + H(+). It carries out the reaction L-threonyl-[protein] + ATP = O-phospho-L-threonyl-[protein] + ADP + H(+). The polypeptide is Glycogen synthase kinase-3 homolog MsK-2 (MSK-2) (Medicago sativa (Alfalfa)).